Reading from the N-terminus, the 148-residue chain is Thiol-disulfide oxidoreductase YkuV (148 aa).

One can recognise a Thioredoxin domain in the interval 2 to 145 (KLRQPMPELT…LEKRVNRVLA (144 aa)). A disulfide bond links C41 and C44.

Monomer.

The protein resides in the cytoplasm. Its function is as follows. Participates in various redox reactions through the reversible oxidation of its active center dithiol to a disulfide and catalyzes dithiol-disulfide exchange reactions. The sequence is that of Thiol-disulfide oxidoreductase YkuV (ykuV) from Bacillus subtilis (strain 168).